A 385-amino-acid polypeptide reads, in one-letter code: uncharacterized protein (385 aa).

Residue Lys194 is modified to N6-(pyridoxal phosphate)lysine.

This sequence belongs to the class-V pyridoxal-phosphate-dependent aminotransferase family. The cofactor is pyridoxal 5'-phosphate.

This is an uncharacterized protein from Methanocaldococcus jannaschii (strain ATCC 43067 / DSM 2661 / JAL-1 / JCM 10045 / NBRC 100440) (Methanococcus jannaschii).